Reading from the N-terminus, the 145-residue chain is UPF0179 protein TV1250 (145 aa).

It belongs to the UPF0179 family.

This is UPF0179 protein TV1250 from Thermoplasma volcanium (strain ATCC 51530 / DSM 4299 / JCM 9571 / NBRC 15438 / GSS1).